Reading from the N-terminus, the 466-residue chain is Uronate isomerase (466 aa).

The protein belongs to the metallo-dependent hydrolases superfamily. Uronate isomerase family.

It carries out the reaction D-glucuronate = D-fructuronate. It catalyses the reaction aldehydo-D-galacturonate = keto-D-tagaturonate. Its pathway is carbohydrate metabolism; pentose and glucuronate interconversion. This Brucella suis (strain ATCC 23445 / NCTC 10510) protein is Uronate isomerase.